The following is a 148-amino-acid chain: MKALIVLGLVLLSVMVQGKVFERCELARTLKRLGMDGYRGISLANWMCLAKWESGYNTRATNYNAGDRSTDYGIFQINSRYWCNDGKTPGAVNACHLSCSALLQDNIADAVACAKRVVRDPQGIRAWVAWRNRCQNRDVRQYVQGCGV.

Residues 1–18 form the signal peptide; sequence MKALIVLGLVLLSVMVQG. The 130-residue stretch at 19–148 folds into the C-type lysozyme domain; the sequence is KVFERCELAR…VRQYVQGCGV (130 aa). Intrachain disulfides connect Cys-24-Cys-146, Cys-48-Cys-134, Cys-83-Cys-99, and Cys-95-Cys-113. Catalysis depends on residues Glu-53 and Asp-71.

The protein belongs to the glycosyl hydrolase 22 family. As to quaternary structure, monomer.

The enzyme catalyses Hydrolysis of (1-&gt;4)-beta-linkages between N-acetylmuramic acid and N-acetyl-D-glucosamine residues in a peptidoglycan and between N-acetyl-D-glucosamine residues in chitodextrins.. Its function is as follows. Lysozymes have primarily a bacteriolytic function; those in tissues and body fluids are associated with the monocyte-macrophage system and enhance the activity of immunoagents. The protein is Lysozyme C (LYZ) of Gorilla gorilla gorilla (Western lowland gorilla).